A 934-amino-acid chain; its full sequence is 2-oxoglutarate dehydrogenase E1 component (934 aa).

The protein belongs to the alpha-ketoglutarate dehydrogenase family. In terms of assembly, homodimer. Part of the 2-oxoglutarate dehydrogenase (OGDH) complex composed of E1 (2-oxoglutarate dehydrogenase), E2 (dihydrolipoamide succinyltransferase) and E3 (dihydrolipoamide dehydrogenase); the complex contains multiple copies of the three enzymatic components (E1, E2 and E3). Thiamine diphosphate serves as cofactor.

The catalysed reaction is N(6)-[(R)-lipoyl]-L-lysyl-[protein] + 2-oxoglutarate + H(+) = N(6)-[(R)-S(8)-succinyldihydrolipoyl]-L-lysyl-[protein] + CO2. Its function is as follows. E1 component of the 2-oxoglutarate dehydrogenase (OGDH) complex which catalyzes the decarboxylation of 2-oxoglutarate, the first step in the conversion of 2-oxoglutarate to succinyl-CoA and CO(2). This is 2-oxoglutarate dehydrogenase E1 component from Staphylococcus epidermidis (strain ATCC 35984 / DSM 28319 / BCRC 17069 / CCUG 31568 / BM 3577 / RP62A).